The following is a 292-amino-acid chain: Hydroxysqualene synthase (292 aa).

Belongs to the phytoene/squalene synthase family. HpnC subfamily.

The enzyme catalyses presqualene diphosphate + H2O = hydroxysqualene + diphosphate. It functions in the pathway secondary metabolite biosynthesis; hopanoid biosynthesis. Functionally, involved in the biosynthesis of the hopanoid precursor squalene (SQ) from farnesyl diphosphate (FPP). Catalyzes the second step, the conversion of presqualene diphosphate (PSPP) to hydroxysqualene (HSQ). In Sinorhizobium fredii (strain NBRC 101917 / NGR234), this protein is Hydroxysqualene synthase.